Consider the following 284-residue polypeptide: MELERIVGSALLTFVQAHLPEADLSGLDEVIFSYVLGVLEDLGPSGPSEENFDMEAFTEMMEAYVPGFAHIPRGIIGDMMQKLSVQLSDARNKENLHPQSSCVQGQVPIFPETPRQAEKLEEESRPPAAPGNTLDEAAAAEELPGVDVLLEVFPTCSMEQAQWVLAKARGDLEEAVHMLVEGKEEGPPGWDGPSQDLPRRLRGPQKDDLKSFILQKYMMVDRAEDQKTHRPMAPKEAPKKLIRYIDNQVVSTKGERFKDVRNPEAEEMKATYINLKPARKYRFH.

The CUE domain occupies 141 to 184; sequence EELPGVDVLLEVFPTCSMEQAQWVLAKARGDLEEAVHMLVEGKE. The disordered stretch occupies residues 183-204; that stretch reads KEEGPPGWDGPSQDLPRRLRGP.

This sequence belongs to the CUEDC2 family. As to quaternary structure, interacts with PGR and ESR1.

The protein resides in the cytoplasm. The protein localises to the nucleus. Its function is as follows. Controls PGR and ESR1 protein levels through their targeting for ubiquitination and subsequent proteasomal degradation. The sequence is that of CUE domain-containing protein 2 (Cuedc2) from Mus musculus (Mouse).